We begin with the raw amino-acid sequence, 1588 residues long: Paternally-expressed gene 3 protein (1588 aa).

Residues 46 to 128 enclose the SCAN box domain; sequence HQRFRNLIYV…TLLENYKEMY (83 aa). 3 disordered regions span residues 128–230, 266–306, and 319–349; these read YQPE…ESYQ, DGHS…RRGI, and KFIKDVSRSSKSGRARESSDRSQRFPRMSDD. Residues 129–142 are compositionally biased toward acidic residues; the sequence is QPEDDNNSDVTSDD. 4 stretches are compositionally biased toward basic and acidic residues: residues 143–152, 161–182, 206–225, and 295–306; these read DMTRNRRESS, SGDRDWDRRGRSRDMEPRDRWS, FEMDRDDDRDSRAYESRSQD, and PEAKKSTHRRGI. 3 consecutive C2H2-type zinc fingers follow at residues 454–476, 507–529, and 565–587; these read YVCDECGRSFSVISEFVEHQIMH, FECKDCGETFNKSAALAEHRKIH, and YECRVCKETFLHSSALIEHQKIH. Residues 588–607 are compositionally biased toward basic and acidic residues; that stretch reads FGDDKDNEREHERERERGET. The interval 588-610 is disordered; the sequence is FGDDKDNEREHERERERGETFRP. The C2H2-type 4 zinc finger occupies 627–649; that stretch reads YECKVCGETFLHSSSLKEHQKIH. Residues 838-930 form a disordered region; sequence LVASKPPRSH…EFSVPSSNVR (93 aa). The segment covering 868-881 has biased composition (basic and acidic residues); that stretch reads LNDKRQKIPARENP. Residues 969–991 form a C2H2-type 5 zinc finger; sequence YECQECGECFAHSSDLTEHQKIH. The interval 1056–1104 is disordered; the sequence is EKSHGEESQGENTDGEETHSEETHGQETIEDPVIQGSDMEDPQKDDPDD. A compositionally biased stretch (basic and acidic residues) spans 1071 to 1082; it reads EETHSEETHGQE. C2H2-type zinc fingers lie at residues 1107–1129, 1163–1185, 1225–1247, 1282–1304, and 1332–1354; these read YECEDCGLGFVDLTDLTDHQKVH, YECPKCGESFIHSSFLFEHQRIH, IRCLLCGQGFIHSSALNEHMRLH, FECAVCGESFINPAELADHVTVH, and YECKDCGKSFIHSTVLTKHKELH. Acidic residues predominate over residues 1395 to 1415; the sequence is AEPEVEAAEPEVEAAEPEVEA. The tract at residues 1395-1495 is disordered; it reads AEPEVEAAEP…GIEDPEEGED (101 aa). 7 tandem repeats follow at residues 1397 to 1403, 1404 to 1410, 1411 to 1417, 1418 to 1422, 1425 to 1429, 1432 to 1436, and 1439 to 1443. Residues 1397 to 1417 form a 3 X 7 AA repeat of P-E-V-E-A-A-E region; that stretch reads PEVEAAEPEVEAAEPEVEAAE. A 4 X 5 AA repeat of P-X-G-E-A region spans residues 1418-1443; that stretch reads PNGEAEGPDGEAAEPIGEAGQPNGEA. Composition is skewed to acidic residues over residues 1449–1466 and 1475–1495; these read DADEPDGAGIEDPEERAE and PEGDADEPDGVGIEDPEEGED. 2 C2H2-type zinc fingers span residues 1505–1527 and 1564–1586; these read YDCHECTETFTSSTAFGEHLKTH and FKCDVCGQLFNDRLSLARHQNTH.

Belongs to the krueppel C2H2-type zinc-finger protein family. As to quaternary structure, homodimer. Interacts with SIAH1A and SIAH2. Interacts with TRAF2.

It is found in the nucleus. The protein resides in the cytoplasm. In terms of biological role, induces apoptosis in cooperation with SIAH1A. Acts as a mediator between p53/TP53 and BAX in a neuronal death pathway that is activated by DNA damage. Acts synergistically with TRAF2 and inhibits TNF induced apoptosis through activation of NF-kappa-B. This Pan troglodytes (Chimpanzee) protein is Paternally-expressed gene 3 protein (PEG3).